The following is a 187-amino-acid chain: dTTP/UTP pyrophosphatase (187 aa).

Residue Asp65 is the Proton acceptor of the active site.

Belongs to the Maf family. YhdE subfamily. The cofactor is a divalent metal cation.

Its subcellular location is the cytoplasm. It carries out the reaction dTTP + H2O = dTMP + diphosphate + H(+). The enzyme catalyses UTP + H2O = UMP + diphosphate + H(+). Its function is as follows. Nucleoside triphosphate pyrophosphatase that hydrolyzes dTTP and UTP. May have a dual role in cell division arrest and in preventing the incorporation of modified nucleotides into cellular nucleic acids. This chain is dTTP/UTP pyrophosphatase, found in Deinococcus geothermalis (strain DSM 11300 / CIP 105573 / AG-3a).